Here is a 547-residue protein sequence, read N- to C-terminus: Glutamyl-tRNA(Gln) amidotransferase subunit B, mitochondrial (547 aa).

This sequence belongs to the GatB/GatE family. GatB subfamily. As to quaternary structure, subunit of the heterotrimeric GatFAB amidotransferase (AdT) complex, composed of A, B and F subunits.

The protein resides in the mitochondrion. The catalysed reaction is L-glutamyl-tRNA(Gln) + L-glutamine + ATP + H2O = L-glutaminyl-tRNA(Gln) + L-glutamate + ADP + phosphate + H(+). Functionally, allows the formation of correctly charged Gln-tRNA(Gln) through the transamidation of misacylated Glu-tRNA(Gln) in the mitochondria. The reaction takes place in the presence of glutamine and ATP through an activated gamma-phospho-Glu-tRNA(Gln). This chain is Glutamyl-tRNA(Gln) amidotransferase subunit B, mitochondrial, found in Lachancea thermotolerans (strain ATCC 56472 / CBS 6340 / NRRL Y-8284) (Yeast).